The sequence spans 435 residues: Glutamyl-tRNA reductase (435 aa).

Substrate contacts are provided by residues 50-53 (TCNR), Ser110, 115-117 (ETQ), and Gln121. Catalysis depends on Cys51, which acts as the Nucleophile. Position 189 to 194 (189 to 194 (GAGEMS)) interacts with NADP(+).

Belongs to the glutamyl-tRNA reductase family. As to quaternary structure, homodimer.

It catalyses the reaction (S)-4-amino-5-oxopentanoate + tRNA(Glu) + NADP(+) = L-glutamyl-tRNA(Glu) + NADPH + H(+). The protein operates within porphyrin-containing compound metabolism; protoporphyrin-IX biosynthesis; 5-aminolevulinate from L-glutamyl-tRNA(Glu): step 1/2. Functionally, catalyzes the NADPH-dependent reduction of glutamyl-tRNA(Glu) to glutamate 1-semialdehyde (GSA). The protein is Glutamyl-tRNA reductase of Campylobacter lari (strain RM2100 / D67 / ATCC BAA-1060).